We begin with the raw amino-acid sequence, 502 residues long: Lysine--tRNA ligase (502 aa).

Residues E411 and E418 each contribute to the Mg(2+) site.

It belongs to the class-II aminoacyl-tRNA synthetase family. In terms of assembly, homodimer. Mg(2+) serves as cofactor.

The protein resides in the cytoplasm. The catalysed reaction is tRNA(Lys) + L-lysine + ATP = L-lysyl-tRNA(Lys) + AMP + diphosphate. This is Lysine--tRNA ligase from Clostridium tetani (strain Massachusetts / E88).